We begin with the raw amino-acid sequence, 424 residues long: Serine--tRNA ligase (424 aa).

L-serine is bound at residue 231-233; that stretch reads TAE. 262–264 lines the ATP pocket; sequence RSE. Glutamate 285 is an L-serine binding site. 349 to 352 lines the ATP pocket; it reads EISS. Serine 385 lines the L-serine pocket.

It belongs to the class-II aminoacyl-tRNA synthetase family. Type-1 seryl-tRNA synthetase subfamily. As to quaternary structure, homodimer. The tRNA molecule binds across the dimer.

The protein localises to the cytoplasm. The catalysed reaction is tRNA(Ser) + L-serine + ATP = L-seryl-tRNA(Ser) + AMP + diphosphate + H(+). The enzyme catalyses tRNA(Sec) + L-serine + ATP = L-seryl-tRNA(Sec) + AMP + diphosphate + H(+). It functions in the pathway aminoacyl-tRNA biosynthesis; selenocysteinyl-tRNA(Sec) biosynthesis; L-seryl-tRNA(Sec) from L-serine and tRNA(Sec): step 1/1. Catalyzes the attachment of serine to tRNA(Ser). Is also able to aminoacylate tRNA(Sec) with serine, to form the misacylated tRNA L-seryl-tRNA(Sec), which will be further converted into selenocysteinyl-tRNA(Sec). The protein is Serine--tRNA ligase of Bacillus cereus (strain AH187).